The primary structure comprises 205 residues: Holliday junction branch migration complex subunit RuvA (205 aa).

Residues 1–64 (MIGRLRGIIL…EDAQLLFGFI (64 aa)) are domain I. The tract at residues 65 to 143 (HKQERVLFRE…GLSGDLFVPQ (79 aa)) is domain II. The segment at 144–156 (GAGEIPAAIDAPA) is flexible linker. The tract at residues 157 to 205 (MPADPEGEAVAALVALGYKPQEASRMVSKVASAGSDCEMLIRDALRAAL) is domain III.

It belongs to the RuvA family. In terms of assembly, homotetramer. Forms an RuvA(8)-RuvB(12)-Holliday junction (HJ) complex. HJ DNA is sandwiched between 2 RuvA tetramers; dsDNA enters through RuvA and exits via RuvB. An RuvB hexamer assembles on each DNA strand where it exits the tetramer. Each RuvB hexamer is contacted by two RuvA subunits (via domain III) on 2 adjacent RuvB subunits; this complex drives branch migration. In the full resolvosome a probable DNA-RuvA(4)-RuvB(12)-RuvC(2) complex forms which resolves the HJ.

Its subcellular location is the cytoplasm. In terms of biological role, the RuvA-RuvB-RuvC complex processes Holliday junction (HJ) DNA during genetic recombination and DNA repair, while the RuvA-RuvB complex plays an important role in the rescue of blocked DNA replication forks via replication fork reversal (RFR). RuvA specifically binds to HJ cruciform DNA, conferring on it an open structure. The RuvB hexamer acts as an ATP-dependent pump, pulling dsDNA into and through the RuvAB complex. HJ branch migration allows RuvC to scan DNA until it finds its consensus sequence, where it cleaves and resolves the cruciform DNA. The polypeptide is Holliday junction branch migration complex subunit RuvA (Sodalis glossinidius (strain morsitans)).